A 351-amino-acid chain; its full sequence is 1-acylglycerol-3-phosphate O-acyltransferase ABHD5 (351 aa).

In terms of domain architecture, AB hydrolase-1 spans 79-184; it reads PLVLLHGFGG…LILVEPWGFP (106 aa). A Phosphoserine modification is found at serine 124. The short motif at 329-334 is the HXXXXD motif element; the sequence is HYVYAD.

The protein belongs to the peptidase S33 family. ABHD4/ABHD5 subfamily. Interacts with ADRP. Interacts with PLIN. Interacts with and PNPLA2. Interacts with PLIN5; promotes interaction with PNPLA2. In terms of tissue distribution, highly expressed in the adipose tissue and testes. Weakly expressed in the liver, muscle, kidney, and heart. Expressed by upper epidermal layers and dermal fibroblasts in skin, hepatocytes and hypothalamus in brain (at protein level).

The protein localises to the cytoplasm. It localises to the lipid droplet. Its subcellular location is the cytosol. It catalyses the reaction a 1-acyl-sn-glycero-3-phosphate + an acyl-CoA = a 1,2-diacyl-sn-glycero-3-phosphate + CoA. It carries out the reaction 1-(9Z-octadecenoyl)-sn-glycero-3-phosphate + (9Z)-octadecenoyl-CoA = 1,2-di-(9Z-octadecenoyl)-sn-glycero-3-phosphate + CoA. The enzyme catalyses 1-(9Z-octadecenoyl)-sn-glycero-3-phosphate + hexadecanoyl-CoA = 1-(9Z)-octadecenoyl-2-hexadecanoyl-sn-glycero-3-phosphate + CoA. The catalysed reaction is 1-(9Z-octadecenoyl)-sn-glycero-3-phosphate + octadecanoyl-CoA = 1-(9Z-octadecenoyl)-2-octadecanoyl-sn-glycero-3-phosphate + CoA. It catalyses the reaction 1-(9Z-octadecenoyl)-sn-glycero-3-phosphate + (5Z,8Z,11Z,14Z)-eicosatetraenoyl-CoA = 1-(9Z)-octadecenoyl-2-(5Z,8Z,11Z,14Z)-eicosatetraenoyl-sn-glycero-3-phosphate + CoA. It carries out the reaction eicosanoyl-CoA + 1-(9Z-octadecenoyl)-sn-glycero-3-phosphate = 1-(9Z)-octadecenoyl-2-eicosanoyl-sn-glycero-3-phosphate + CoA. The enzyme catalyses 1-hexadecanoyl-sn-glycero-3-phosphate + (9Z)-octadecenoyl-CoA = 1-hexadecanoyl-2-(9Z-octadecenoyl)-sn-glycero-3-phosphate + CoA. The catalysed reaction is 1-octadecanoyl-sn-glycero-3-phosphate + (9Z)-octadecenoyl-CoA = 1-octadecanoyl-2-(9Z-octadecenoyl)-sn-glycero-3-phosphate + CoA. It catalyses the reaction 1-(5Z,8Z,11Z,14Z-eicosatetraenoyl)-sn-glycero-3-phosphate + (9Z)-octadecenoyl-CoA = 1-(5Z,8Z,11Z,14Z)-eicosatetraenoyl-2-(9Z)-octadecenoyl-sn-glycero-3-phosphate + CoA. With respect to regulation, acyltransferase activity is inhibited by detergents such as Triton X-100 and 3-[(3-cholamidopropyl)dimethylammonio]-1-propanesulfonate (CHAPS). Acyltransferase activity is inhibited by the presence of magnesium and calcium. Its function is as follows. Coenzyme A-dependent lysophosphatidic acid acyltransferase that catalyzes the transfer of an acyl group on a lysophosphatidic acid. Functions preferentially with 1-oleoyl-lysophosphatidic acid followed by 1-palmitoyl-lysophosphatidic acid, 1-stearoyl-lysophosphatidic acid and 1-arachidonoyl-lysophosphatidic acid as lipid acceptor. Functions preferentially with arachidonoyl-CoA followed by oleoyl-CoA as acyl group donors. Functions in phosphatidic acid biosynthesis. May regulate the cellular storage of triacylglycerol through activation of the phospholipase PNPLA2. Involved in keratinocyte differentiation. Regulates lipid droplet fusion. This is 1-acylglycerol-3-phosphate O-acyltransferase ABHD5 from Mus musculus (Mouse).